Consider the following 569-residue polypeptide: Probable protein phosphatase 2C BIPP2C1 (569 aa).

Disordered regions lie at residues 166-212 (GSSN…SSKV) and 251-279 (SLDD…GSSI). The span at 174-183 (SEVGVESECG) shows a compositional bias: low complexity. The PPM-type phosphatase domain occupies 329–564 (AAMLPHPSKV…DDVTVVVSVV (236 aa)). The Mn(2+) site is built by Asp-358, Gly-359, Asp-488, and Asp-555.

The protein belongs to the PP2C family. Mg(2+) serves as cofactor. Mn(2+) is required as a cofactor.

The catalysed reaction is O-phospho-L-seryl-[protein] + H2O = L-seryl-[protein] + phosphate. It catalyses the reaction O-phospho-L-threonyl-[protein] + H2O = L-threonyl-[protein] + phosphate. In terms of biological role, may play a role in responses to biotic and abiotic stresses. The chain is Probable protein phosphatase 2C BIPP2C1 (BIPP2C1) from Oryza sativa subsp. indica (Rice).